The sequence spans 613 residues: ATP-dependent zinc metalloprotease FtsH (613 aa).

The Cytoplasmic portion of the chain corresponds to 1 to 4 (MVKN). The helical transmembrane segment at 5-25 (LIFWLVITVVLMSVFQNFNSS) threads the bilayer. Topologically, residues 26–98 (DTSNHRVDYS…VGEIPEEPSL (73 aa)) are extracellular. A helical transmembrane segment spans residues 99–119 (LISIFISWFPMLLLIGVWIFF). Topologically, residues 120–613 (MRQMQMGGGK…WLEVDQKKDI (494 aa)) are cytoplasmic. ATP is bound at residue 192–199 (GPPGTGKT). Position 414 (His414) interacts with Zn(2+). Glu415 is an active-site residue. Residues His418 and Asp492 each contribute to the Zn(2+) site.

In the central section; belongs to the AAA ATPase family. The protein in the C-terminal section; belongs to the peptidase M41 family. Homohexamer. It depends on Zn(2+) as a cofactor.

The protein localises to the cell membrane. Functionally, acts as a processive, ATP-dependent zinc metallopeptidase for both cytoplasmic and membrane proteins. Plays a role in the quality control of integral membrane proteins. This chain is ATP-dependent zinc metalloprotease FtsH, found in Buchnera aphidicola subsp. Schizaphis graminum (strain Sg).